The primary structure comprises 283 residues: Pantothenate synthetase (283 aa).

31–38 is an ATP binding site; sequence MGALHDGH. The active-site Proton donor is His-38. Position 62 (Gln-62) interacts with (R)-pantoate. Gln-62 contributes to the beta-alanine binding site. Residue 148–151 coordinates ATP; that stretch reads GKKD. (R)-pantoate is bound at residue Gln-154. ATP contacts are provided by residues Val-177 and 185-188; that span reads KSSR.

Belongs to the pantothenate synthetase family. As to quaternary structure, homodimer.

Its subcellular location is the cytoplasm. The catalysed reaction is (R)-pantoate + beta-alanine + ATP = (R)-pantothenate + AMP + diphosphate + H(+). Its pathway is cofactor biosynthesis; (R)-pantothenate biosynthesis; (R)-pantothenate from (R)-pantoate and beta-alanine: step 1/1. Catalyzes the condensation of pantoate with beta-alanine in an ATP-dependent reaction via a pantoyl-adenylate intermediate. This Staphylococcus aureus (strain MSSA476) protein is Pantothenate synthetase.